A 270-amino-acid chain; its full sequence is Glutamate racemase (270 aa).

Residues 7–8 (DS) and 39–40 (YG) contribute to the substrate site. Catalysis depends on cysteine 70, which acts as the Proton donor/acceptor. A substrate-binding site is contributed by 71–72 (NT). Residue cysteine 194 is the Proton donor/acceptor of the active site. 195 to 196 (TH) contacts substrate.

This sequence belongs to the aspartate/glutamate racemases family.

The catalysed reaction is L-glutamate = D-glutamate. The protein operates within cell wall biogenesis; peptidoglycan biosynthesis. Provides the (R)-glutamate required for cell wall biosynthesis. The sequence is that of Glutamate racemase from Cereibacter sphaeroides (strain ATCC 17025 / ATH 2.4.3) (Rhodobacter sphaeroides).